The sequence spans 239 residues: Purine nucleoside phosphorylase DeoD-type (239 aa).

H5 contacts a purine D-ribonucleoside. Phosphate-binding positions include G21, R25, R44, and 88–91 (RVGS). Residues 180–182 (EME) and 204–205 (SD) contribute to the a purine D-ribonucleoside site. D205 acts as the Proton donor in catalysis.

Belongs to the PNP/UDP phosphorylase family. Homohexamer; trimer of homodimers.

The enzyme catalyses a purine D-ribonucleoside + phosphate = a purine nucleobase + alpha-D-ribose 1-phosphate. The catalysed reaction is a purine 2'-deoxy-D-ribonucleoside + phosphate = a purine nucleobase + 2-deoxy-alpha-D-ribose 1-phosphate. In terms of biological role, catalyzes the reversible phosphorolytic breakdown of the N-glycosidic bond in the beta-(deoxy)ribonucleoside molecules, with the formation of the corresponding free purine bases and pentose-1-phosphate. This chain is Purine nucleoside phosphorylase DeoD-type, found in Myxococcus xanthus (strain DK1622).